The following is a 107-amino-acid chain: Antimicrobial peptide microplusin (107 aa).

Positions 1–19 (MKSLLVCLVLAVVVLVASG) are cleaved as a signal peptide. Intrachain disulfides connect C25/C60, C38/C88, and C49/C54. Residues 86-107 (TDCDHSHGHEHSHGHEHGHGHH) form a disordered region. The segment covering 87–107 (DCDHSHGHEHSHGHEHGHGHH) has biased composition (basic and acidic residues).

The protein localises to the secreted. Has bacteriostatic activity against Gram-positive bacteria, but not against Gram-negative bacteria. Has fungistatic activity against some but not all fungi. Binds and sequesters copper and iron ions. Copper-chelating is crucial for antimicrobial activity against M.luteus. The protein is Antimicrobial peptide microplusin of Ixodes scapularis (Black-legged tick).